A 64-amino-acid polypeptide reads, in one-letter code: Beta-defensin 13 (64 aa).

Residues 1 to 22 (MRIFSLIVAGLVLLIQLYPAWG) form the signal peptide. Disulfide bonds link C30–C57, C37–C51, and C41–C58.

It belongs to the beta-defensin family. As to expression, expressed in testis and to a lesser extent in epididymis (caput, corpus and cauda). Also weakly expressed in kidneys.

It is found in the secreted. Functionally, has antibacterial activity. This chain is Beta-defensin 13 (Defb13), found in Mus musculus (Mouse).